Consider the following 319-residue polypeptide: Mercury resistance probable Hg transport protein (319 aa).

Hg(2+)-binding residues include Cys-298, Cys-299, Cys-318, and Cys-319.

The chain is Mercury resistance probable Hg transport protein from Streptomyces lividans.